The following is a 232-amino-acid chain: Lipopolysaccharide core heptose(II) kinase WaaY (232 aa).

The protein belongs to the protein kinase superfamily. RfaY/WaaY family.

The catalysed reaction is alpha-D-Glc-(1-&gt;3)-[L-alpha-D-Hep-(1-&gt;7)]-L-alpha-D-Hep-(1-&gt;3)-4-O-PO3(2-)-L-alpha-D-Hep-(1-&gt;5)-[alpha-Kdo-(2-&gt;4)]-alpha-Kdo-(2-&gt;6)-lipid A + ATP = alpha-D-Glc-(1-&gt;3)-[L-alpha-D-Hep-(1-&gt;7)]-4-O-PO3(2-)-L-alpha-D-Hep-(1-&gt;3)-4-O-PO3(2-)-L-alpha-D-Hep-(1-&gt;5)-[alpha-Kdo-(2-&gt;4)]-alpha-Kdo-(2-&gt;6)-lipid A + ADP + H(+). It participates in bacterial outer membrane biogenesis; LPS core biosynthesis. Functionally, kinase involved in the biosynthesis of the core oligosaccharide region of lipopolysaccharide (LPS). Catalyzes the phosphorylation of the second heptose unit (HepII) of the inner core. The sequence is that of Lipopolysaccharide core heptose(II) kinase WaaY from Salmonella typhimurium (strain LT2 / SGSC1412 / ATCC 700720).